Here is a 253-residue protein sequence, read N- to C-terminus: Indole-3-glycerol phosphate synthase (253 aa).

It belongs to the TrpC family.

The catalysed reaction is 1-(2-carboxyphenylamino)-1-deoxy-D-ribulose 5-phosphate + H(+) = (1S,2R)-1-C-(indol-3-yl)glycerol 3-phosphate + CO2 + H2O. Its pathway is amino-acid biosynthesis; L-tryptophan biosynthesis; L-tryptophan from chorismate: step 4/5. The sequence is that of Indole-3-glycerol phosphate synthase from Exiguobacterium sp. (strain ATCC BAA-1283 / AT1b).